The following is a 609-amino-acid chain: UvrABC system protein C (609 aa).

In terms of domain architecture, GIY-YIG spans 16–94 (HLPGVYRHLD…IKSLRPRYNI (79 aa)). One can recognise a UVR domain in the interval 203–238 (REVMDEIEARMLQASTELRFEEAAVLRDQMGSLSKV).

It belongs to the UvrC family. As to quaternary structure, interacts with UvrB in an incision complex.

The protein localises to the cytoplasm. The UvrABC repair system catalyzes the recognition and processing of DNA lesions. UvrC both incises the 5' and 3' sides of the lesion. The N-terminal half is responsible for the 3' incision and the C-terminal half is responsible for the 5' incision. This Bordetella bronchiseptica (strain ATCC BAA-588 / NCTC 13252 / RB50) (Alcaligenes bronchisepticus) protein is UvrABC system protein C.